The primary structure comprises 1035 residues: Kinesin-like protein KIN-4A (1035 aa).

Residues C10 to I369 form the Kinesin motor domain. ATP is bound at residue G89–T96. Coiled-coil stretches lie at residues V380–H437 and M498–S702. Disordered stretches follow at residues E697 to E720, V766 to S787, and H882 to P928. Composition is skewed to polar residues over residues R704 to S716 and N778 to S787. Residues N850–A904 adopt a coiled-coil conformation. Over residues H882–E898 the composition is skewed to basic and acidic residues. Over residues V902–L926 the composition is skewed to polar residues. The Nuclear localization signal motif lies at K971–R987. Residues D1014–M1035 are disordered.

The protein belongs to the TRAFAC class myosin-kinesin ATPase superfamily. Kinesin family. KIN-4 subfamily. Homodimer. In terms of tissue distribution, expressed in young tissues with cell divisions, including initiating adventitious roots, primary root tips, flower primordia, intercalary meristems, sub-epidermal regions of young culms and panicles.

It is found in the nucleus. The protein resides in the cytoplasm. The protein localises to the cytoskeleton. May be regulated by cyclin-dependent kinase A. Its function is as follows. Microtubule-dependent motor protein involved in the control of the oriented deposition of cellulose microfibrils. Involved in wall biogenesis and modification, and contributes to cell-cycle progression and cell division. Acts as a transcriptional activator in gibberellic acid (GA) biosynthesis pathway. Binds specifically to the DNA sequence 5'-ACCAACTTGAA-3' of the ent-kaurene oxidase 2 (CYP701A6 or OsKO2) promoter. May regulate CYP701A6 gene expression and mediates cell elongation by regulating the GA biosynthesis pathway. The chain is Kinesin-like protein KIN-4A from Oryza sativa subsp. japonica (Rice).